We begin with the raw amino-acid sequence, 599 residues long: MVIEHIRNFSIIAHIDHGKSTLADRLLEFTGTVSSREKQDQFLDKMDLERERGITIKAQTVRLNYRADDGKDYVLNLIDTPGHVDFTYEVSRSLTACEGGLLVVDASQGVEAQTLANVYLALDANLEVFVVLNKIDLPAAEPERVKAEIEEIIGLDTHDAVLASAKEGIGTKDILEEIVKKIPPPQGDPAKPLKALLFDSWYDQYQGVIILVRIVDGVVKKGDKIQLMSNKKTHEVLKAGVFSPEMRETQQLCAGEVGFIIAGIREVADAKVGDTVTLLHNPCDAALAGYKEVKPMVFSGLYPIDTSQYEQLRDALAKLKLNDSSFSYDPETSLALGFGFRCGFLGLLHMEIIQERLEREFNLELITTAPTVVYRVHGTDGSLTTIQSANQLPPTQEIAYVEEPFILASIHVPNDFVGGILALCEEKRGVQREIKYLTPTRVMVVYELPLNEVVLDFYDRLKSITKGYASLDYELLDYRQSELVRLNIMINGEVVDALSLIIHKDKAYYRGRELVSKMKELIPRQMFEIAIQAAVGTKVIARETVKAMRKDVLAKCYGGDITRKRKLLEKQKEGKKRMKNVGNVELPQEAFLAILKVEG.

Residues 4 to 186 (EHIRNFSIIA…EIVKKIPPPQ (183 aa)) form the tr-type G domain. Residues 16–21 (DHGKST) and 133–136 (NKID) each bind GTP.

It belongs to the TRAFAC class translation factor GTPase superfamily. Classic translation factor GTPase family. LepA subfamily.

It localises to the cell inner membrane. The enzyme catalyses GTP + H2O = GDP + phosphate + H(+). Required for accurate and efficient protein synthesis under certain stress conditions. May act as a fidelity factor of the translation reaction, by catalyzing a one-codon backward translocation of tRNAs on improperly translocated ribosomes. Back-translocation proceeds from a post-translocation (POST) complex to a pre-translocation (PRE) complex, thus giving elongation factor G a second chance to translocate the tRNAs correctly. Binds to ribosomes in a GTP-dependent manner. In Geobacter sp. (strain M21), this protein is Elongation factor 4.